Here is a 353-residue protein sequence, read N- to C-terminus: Histidinol-phosphate aminotransferase (353 aa).

An N6-(pyridoxal phosphate)lysine modification is found at lysine 218.

This sequence belongs to the class-II pyridoxal-phosphate-dependent aminotransferase family. Histidinol-phosphate aminotransferase subfamily. In terms of assembly, homodimer. Pyridoxal 5'-phosphate is required as a cofactor.

The catalysed reaction is L-histidinol phosphate + 2-oxoglutarate = 3-(imidazol-4-yl)-2-oxopropyl phosphate + L-glutamate. The protein operates within amino-acid biosynthesis; L-histidine biosynthesis; L-histidine from 5-phospho-alpha-D-ribose 1-diphosphate: step 7/9. The polypeptide is Histidinol-phosphate aminotransferase (Synechococcus sp. (strain JA-3-3Ab) (Cyanobacteria bacterium Yellowstone A-Prime)).